The primary structure comprises 527 residues: Berberine bridge enzyme-like 8 (527 aa).

Residues 1–20 (MKYALILVLFFVVFIWQSSS) form the signal peptide. Cysteines 31 and 93 form a disulfide. N-linked (GlcNAc...) asparagine glycans are attached at residues Asn-51 and Asn-68. An FAD-binding PCMH-type domain is found at 71-247 (STPKPFLIIA…LAYKINLVEV (177 aa)). Positions 108-172 (HDYDGLSYVT…KTLAYPAGIC (65 aa)) form a cross-link, 6-(S-cysteinyl)-8alpha-(pros-histidyl)-FAD (His-Cys). Asn-250, Asn-263, and Asn-292 each carry an N-linked (GlcNAc...) asparagine glycan.

This sequence belongs to the oxygen-dependent FAD-linked oxidoreductase family. FAD serves as cofactor. Post-translationally, the FAD cofactor is bound via a bicovalent 6-S-cysteinyl, 8alpha-N1-histidyl FAD linkage.

The protein resides in the secreted. Its subcellular location is the cell wall. This is Berberine bridge enzyme-like 8 from Arabidopsis thaliana (Mouse-ear cress).